Consider the following 349-residue polypeptide: UDP-N-acetylenolpyruvoylglucosamine reductase (349 aa).

Positions 25–197 (GIAARARFAA…VAVTFRLPKQ (173 aa)) constitute an FAD-binding PCMH-type domain. The active site involves Arg-173. The Proton donor role is filled by Ser-249. Glu-345 is a catalytic residue.

The protein belongs to the MurB family. FAD is required as a cofactor.

The protein resides in the cytoplasm. The catalysed reaction is UDP-N-acetyl-alpha-D-muramate + NADP(+) = UDP-N-acetyl-3-O-(1-carboxyvinyl)-alpha-D-glucosamine + NADPH + H(+). It functions in the pathway cell wall biogenesis; peptidoglycan biosynthesis. Functionally, cell wall formation. The chain is UDP-N-acetylenolpyruvoylglucosamine reductase from Burkholderia orbicola (strain MC0-3).